Here is a 291-residue protein sequence, read N- to C-terminus: START domain-containing protein 10 (291 aa).

An N-acetylmethionine modification is found at methionine 1. The tract at residues 1 to 20 (MEKLAASTEPQGPRPVLGRE) is disordered. Residues 14 to 224 (RPVLGRESVQ…MYKACLKYPE (211 aa)) form the START domain. N6-succinyllysine occurs at positions 94, 197, and 202. 2 positions are modified to phosphoserine: serine 253 and serine 259. The interval 260–291 (LENIDESAVAESREERMGGAGGEGSDDDTSLT) is disordered. Serine 284 bears the Phosphoserine; by CK2 mark. At serine 289 the chain carries Phosphoserine.

Phosphorylation at Ser-284 by CK2 negatively regulates lipid transfer activity, possibly by decreasing membrane association.

The protein localises to the cell projection. The protein resides in the cilium. Its subcellular location is the flagellum. It localises to the cytoplasm. It is found in the membrane. May play metabolic roles in sperm maturation or fertilization. Phospholipid transfer protein that preferentially selects lipid species containing a palmitoyl or stearoyl chain on the sn-1 and an unsaturated fatty acyl chain (18:1 or 18:2) on the sn-2 position. Able to transfer phosphatidylcholine (PC) and phosphatidyetanolamline (PE) between membranes. The chain is START domain-containing protein 10 (STARD10) from Homo sapiens (Human).